The following is a 300-amino-acid chain: Peroxisomal 2,4-dienoyl-CoA reductase [(3E)-enoyl-CoA-producing] (300 aa).

Residues Gly-42–Ile-47, Arg-67–Lys-71, and Asp-93 each bind NADP(+). Arg-67 contacts substrate. Substrate is bound by residues Arg-95, Phe-125, and Ser-133–Asn-135. Residues Lys-189 and Pro-215–Thr-221 each bind NADP(+). Arg-226 contacts substrate. Residues Ala-298–Leu-300 carry the Microbody targeting signal motif.

Belongs to the short-chain dehydrogenases/reductases (SDR) family. 2,4-dienoyl-CoA reductase subfamily. As to quaternary structure, monomer, dimer and oligomer.

The protein resides in the peroxisome. It catalyses the reaction a (2E,4Z)-dienoyl-CoA + NADPH + H(+) = a 4,5-saturated-(3E)-enoyl-CoA + NADP(+). The enzyme catalyses a (2E,4E)-dienoyl-CoA + NADPH + H(+) = a 4,5-saturated-(3E)-enoyl-CoA + NADP(+). The catalysed reaction is (2E,4E)-hexadienoyl-CoA + NADPH + H(+) = (3E)-hexenoyl-CoA + NADP(+). It carries out the reaction (2E,4E)-decadienoyl-CoA + NADPH + H(+) = (3E)-decenoyl-CoA + NADP(+). It catalyses the reaction (2E,4Z,7Z,10Z,13Z,16Z,19Z)-docosaheptaenoyl-CoA + NADPH + H(+) = (3E,7Z,10Z,13Z,16Z,19Z)-docosahexaenoyl-CoA + NADP(+). Functionally, auxiliary enzyme of beta-oxidation. Participates in the degradation of unsaturated fatty enoyl-CoA esters having double bonds in both even- and odd-numbered positions in peroxisome. Catalyzes the NADP-dependent reduction of 2,4-dienoyl-CoA to yield trans-3-enoyl-CoA. This chain is Peroxisomal 2,4-dienoyl-CoA reductase [(3E)-enoyl-CoA-producing] (decr2), found in Danio rerio (Zebrafish).